The sequence spans 227 residues: MFGQGRLGQAMALLLFLGMTAALARGCLQCDPNFAEKFSFYRHHVNLKSWWVGDIPVSGMLLSDWIQNTMKELHLAIPAEITRKKLYQVAEAVYQRMDQLYQGKMYFPGYFPNELRAIFREQVRLIQNAIIESRIDCQRHCGIYQYETISCSNCTDSHVICFGYYCKSSAQWESAVQGLLKYINTWHKQDEKMRTTPAFLSQNIKCLEPQHLVNLTLEKVSECLTQH.

An N-terminal signal peptide occupies residues 1-24 (MFGQGRLGQAMALLLFLGMTAALA). N-linked (GlcNAc...) asparagine glycosylation is found at Asn153 and Asn214.

Belongs to the Izumo family.

Its subcellular location is the secreted. The sequence is that of Izumo sperm-egg fusion protein 4 (Izumo4) from Mus musculus (Mouse).